The chain runs to 250 residues: Geranylgeranylglyceryl phosphate synthase (250 aa).

Mg(2+) contacts are provided by aspartate 26 and serine 55. Residues 174-180 (YLEAGSG), 205-206 (GG), and 227-228 (GT) each bind sn-glycerol 1-phosphate.

Belongs to the GGGP/HepGP synthase family. Group II subfamily. Mg(2+) serves as cofactor.

The protein localises to the cytoplasm. It carries out the reaction sn-glycerol 1-phosphate + (2E,6E,10E)-geranylgeranyl diphosphate = sn-3-O-(geranylgeranyl)glycerol 1-phosphate + diphosphate. Its pathway is membrane lipid metabolism; glycerophospholipid metabolism. Prenyltransferase that catalyzes the transfer of the geranylgeranyl moiety of geranylgeranyl diphosphate (GGPP) to the C3 hydroxyl of sn-glycerol-1-phosphate (G1P). This reaction is the first ether-bond-formation step in the biosynthesis of archaeal membrane lipids. This is Geranylgeranylglyceryl phosphate synthase from Nitrosopumilus maritimus (strain SCM1).